Consider the following 298-residue polypeptide: Urease accessory protein UreD 3 (298 aa).

A disordered region spans residues 1–30; the sequence is MADEAGTRSAGGRPIPAAEPLRPALSRQRS.

Belongs to the UreD family. UreD, UreF and UreG form a complex that acts as a GTP-hydrolysis-dependent molecular chaperone, activating the urease apoprotein by helping to assemble the nickel containing metallocenter of UreC. The UreE protein probably delivers the nickel.

It localises to the cytoplasm. In terms of biological role, required for maturation of urease via the functional incorporation of the urease nickel metallocenter. In Methylorubrum extorquens (strain PA1) (Methylobacterium extorquens), this protein is Urease accessory protein UreD 3.